A 421-amino-acid polypeptide reads, in one-letter code: Phosphoglycerate kinase (421 aa).

The (2R)-3-phosphoglycerate site is built by Val23, Asp24, Phe25, Asn26, Gln41, Arg42, Ser65, His66, Gly68, Arg69, Leu124, Arg125, His172, and Arg173. Gly216 contacts ADP. A CDP-binding site is contributed by Gly216. Position 218 (Lys218) interacts with AMP. Residue Asp221 participates in CDP binding. A Mg(2+)-binding site is contributed by Asp221. Residue Lys222 participates in AMP binding. Lys222 is a binding site for ATP. Gly240 contacts ADP. Position 240 (Gly240) interacts with CDP. 2 residues coordinate AMP: Gly241 and Gly315. 2 residues coordinate ATP: Gly241 and Gly315. CDP contacts are provided by Gly340 and Phe345. Phe345 is an ADP binding site. Glu346 is a binding site for AMP. ATP is bound by residues Glu346, Asp377, and Thr378. Asp377 lines the Mg(2+) pocket.

The protein belongs to the phosphoglycerate kinase family. In terms of assembly, monomer. It depends on Mg(2+) as a cofactor.

It localises to the cytoplasm. Its subcellular location is the mitochondrion. The enzyme catalyses (2R)-3-phosphoglycerate + ATP = (2R)-3-phospho-glyceroyl phosphate + ADP. Its pathway is carbohydrate degradation; glycolysis; pyruvate from D-glyceraldehyde 3-phosphate: step 2/5. Functionally, catalyzes one of the two ATP producing reactions in the glycolytic pathway via the reversible conversion of 1,3-diphosphoglycerate to 3-phosphoglycerate. Both L- and D- forms of purine and pyrimidine nucleotides can be used as substrates, but the activity is much lower on pyrimidines. Negatively regulates the biosynthesis of acetyl-CoA from pyruvate in the mitochondrion. This Emericella nidulans (strain FGSC A4 / ATCC 38163 / CBS 112.46 / NRRL 194 / M139) (Aspergillus nidulans) protein is Phosphoglycerate kinase (pgkA).